The sequence spans 288 residues: Programmed cell death protein 1 (288 aa).

An N-terminal signal peptide occupies residues 1–24 (MWVRQVPWSFTWAVLQLSWQSGWL). Over 25–169 (LEVPNGPWRS…PKPEGRFQGM (145 aa)) the chain is Extracellular. Residues 31–139 (PWRSLTFYPA…PKAKIEESPG (109 aa)) form the Ig-like V-type domain. 4 N-linked (GlcNAc...) asparagine glycosylation sites follow: asparagine 49, asparagine 58, asparagine 74, and asparagine 116. A disulfide bond links cysteine 54 and cysteine 123. Positions 70–77 (LSPSNQTE) are interaction with CD274/PDCD1L1. A helical transmembrane segment spans residues 170 to 190 (VIGIMSALVGIPVLLLLAWAL). Over 191 to 288 (AVFCSTSMSE…HEDGHCSWPL (98 aa)) the chain is Cytoplasmic. An ITIM motif motif is present at residues 223–228 (VAYEEL). Tyrosine 225 is modified (phosphotyrosine). Lysine 235 participates in a covalent cross-link: Glycyl lysine isopeptide (Lys-Gly) (interchain with G-Cter in ubiquitin). At threonine 236 the chain carries Phosphothreonine; by MAPK3. The short motif at 247–251 (EYATI) is the ITSM motif element. Tyrosine 248 is subject to Phosphotyrosine. Positions 263–288 (GRRGSADGLQGPRPPRHEDGHCSWPL) are disordered. Residues 277–288 (PRHEDGHCSWPL) are compositionally biased toward basic and acidic residues.

As to quaternary structure, monomer. Interacts with CD274/PDCD1L1. Interacts with CD273/PDCD1LG2. Interacts with FBXO38; leading to ubiquitination and degradation by the proteasome. In terms of processing, ubiquitinated at Lys-235 by the SCF(FBXO38) complex, leading to its proteasomal degradation. Ubiquitinated via 'Lys-48'-linked polyubiquitin chains. Deubiquitinated and thus stabilized by USP5. Tyrosine phosphorylated at Tyr-225 (within ITIM motif) and Tyr-248 (ITSM motif) upon ligand binding. Phosphorylation at Tyr-248 promotes the recruitment of the protein tyrosine phosphatase PTPN11/SHP-2 that mediates dephosphorylation of key TCR proximal signaling molecules, such as ZAP70, PRKCQ/PKCtheta and CD247/CD3zeta. Phosphorylation at Thr-236 promotes the recruitment of the deubiquitinase USP5. As to expression, thymus-specific.

It is found in the cell membrane. In terms of biological role, inhibitory receptor on antigen activated T-cells that plays a critical role in induction and maintenance of immune tolerance to self. Delivers inhibitory signals upon binding to ligands, such as CD274/PDCD1L1 and CD273/PDCD1LG2. Following T-cell receptor (TCR) engagement, PDCD1 associates with CD3-TCR in the immunological synapse and directly inhibits T-cell activation. Suppresses T-cell activation through the recruitment of PTPN11/SHP-2: following ligand-binding, PDCD1 is phosphorylated within the ITSM motif, leading to the recruitment of the protein tyrosine phosphatase PTPN11/SHP-2 that mediates dephosphorylation of key TCR proximal signaling molecules, such as ZAP70, PRKCQ/PKCtheta and CD247/CD3zeta. The PDCD1-mediated inhibitory pathway is exploited by tumors to attenuate anti-tumor immunity and facilitate tumor survival. This is Programmed cell death protein 1 from Mus musculus (Mouse).